A 359-amino-acid chain; its full sequence is 3-dehydroquinate synthase (359 aa).

Residues 70-75 (DGEQYK), 105-109 (GVIGD), 129-130 (TT), lysine 142, lysine 151, and 169-172 (FYKT) each bind NAD(+). Glutamate 184, histidine 247, and histidine 264 together coordinate Zn(2+).

Belongs to the sugar phosphate cyclases superfamily. Dehydroquinate synthase family. Requires Co(2+) as cofactor. It depends on Zn(2+) as a cofactor. NAD(+) is required as a cofactor.

The protein localises to the cytoplasm. The enzyme catalyses 7-phospho-2-dehydro-3-deoxy-D-arabino-heptonate = 3-dehydroquinate + phosphate. Its pathway is metabolic intermediate biosynthesis; chorismate biosynthesis; chorismate from D-erythrose 4-phosphate and phosphoenolpyruvate: step 2/7. Functionally, catalyzes the conversion of 3-deoxy-D-arabino-heptulosonate 7-phosphate (DAHP) to dehydroquinate (DHQ). This is 3-dehydroquinate synthase from Francisella tularensis subsp. holarctica (strain OSU18).